The chain runs to 508 residues: uncharacterized protein (508 aa).

It localises to the virion. This is an uncharacterized protein from Acanthamoeba polyphaga mimivirus (APMV).